The following is a 766-amino-acid chain: MSEEETVSAPAPASTPAPAGTDVGSGGAAAGIANAGAEGGDGAEDVKKHGSKMLVGPRPPQNAIFIHKLYQILEDESLHDLIWWTPSGLSFMIKPVERFSKALATYFKHTNITSFVRQLNIYGFHKVSHDHSSNDANSGDDANTNDDSNTHDDNSGNKNSSGDENTGGGVQEKEKSNPTKIWEFKHSSGIFKKGDIEGLKHIKRRASSRNNSSINSRKNSSNQNYDIDSGARVRPSSIQDPSTSSNSFGNFVPQIPGANNSIPEYFNNSHVTYENANHAPLESNNPEMQEQNRPPNFQDETLKHLKEINFDMVKIIESMQHFISLQHSFCSQSFTFKNVSKKKSENIVKDHQKQLQAFESDMLTFKQHVMSRAHRTIDSLCAVNAAATAASVAPAPAPTSTSAYAPKSQYEMMVPPGNQYVPQKSSSTTNIPSRFNTASVPPSQLFVQYQPQSQQHVTYAKQPAHVPNFINQPIPIQQLPPQYADTFSTPQMMHNPFASKNNNKPGNTKRTNSVLMDPLTPAASVGVQGPLNYPIMNINPSVRDYNKPVPQNMAPSPIYPINEPTTRLYSQPKMRSLGSTSSLPNDRRNSPLKLTPRSSLNEDSLYPKPRNSLKSSISGTSLSSSFTLVANNPAPIRYSQQGLLRSLNKAANCAPDSVTPLDSSVLTGPPPKNMDNLPAVSSNLINSPMNVEHSSSLSQAEPAPQIELPQPSLPTTSTTKNTGEADNSKRKGSGVYSLLNQEDSSTSSADPKTEDKAAPALKKVKM.

Disordered regions lie at residues 1 to 52 (MSEE…HGSK), 129 to 181 (HDHS…PTKI), 203 to 247 (KRRA…SSNS), 547 to 619 (KPVP…SISG), and 657 to 766 (SVTP…KVKM). 2 stretches are compositionally biased toward low complexity: residues 8–19 (SAPAPASTPAPA) and 134–147 (NDAN…TNDD). Residues 64-186 (IFIHKLYQIL…NPTKIWEFKH (123 aa)) mediate DNA binding. The span at 171 to 181 (QEKEKSNPTKI) shows a compositional bias: basic and acidic residues. Residues 208–224 (SRNNSSINSRKNSSNQN) show a composition bias toward low complexity. The residue at position 220 (S220) is a Phosphoserine. The segment covering 236–247 (SSIQDPSTSSNS) has biased composition (polar residues). A Phosphoserine modification is found at S556. Polar residues predominate over residues 679–699 (AVSSNLINSPMNVEHSSSLSQ). Positions 708-719 (LPQPSLPTTSTT) are enriched in low complexity. The residue at position 733 (S733) is a Phosphoserine. Polar residues predominate over residues 738-750 (LLNQEDSSTSSAD).

The protein in the N-terminal section; belongs to the HSF family.

The protein resides in the nucleus. In terms of biological role, involved in cell surface assembly and regulation of the gene related to flocculation (asexual cell aggregation). Mutations in SFL1 causes constitutive cell aggregation. This chain is Flocculation suppression protein (SFL1), found in Saccharomyces cerevisiae (strain ATCC 204508 / S288c) (Baker's yeast).